Here is a 218-residue protein sequence, read N- to C-terminus: Elongation factor Ts (218 aa).

An involved in Mg(2+) ion dislocation from EF-Tu region spans residues 82-85; that stretch reads TDFV.

This sequence belongs to the EF-Ts family.

The protein localises to the cytoplasm. In terms of biological role, associates with the EF-Tu.GDP complex and induces the exchange of GDP to GTP. It remains bound to the aminoacyl-tRNA.EF-Tu.GTP complex up to the GTP hydrolysis stage on the ribosome. The polypeptide is Elongation factor Ts (tsf) (Synechocystis sp. (strain ATCC 27184 / PCC 6803 / Kazusa)).